A 489-amino-acid polypeptide reads, in one-letter code: UDP-N-acetylmuramoylalanine--D-glutamate ligase (489 aa).

126–132 (GTNGKTT) is a binding site for ATP.

This sequence belongs to the MurCDEF family.

It is found in the cytoplasm. It carries out the reaction UDP-N-acetyl-alpha-D-muramoyl-L-alanine + D-glutamate + ATP = UDP-N-acetyl-alpha-D-muramoyl-L-alanyl-D-glutamate + ADP + phosphate + H(+). It functions in the pathway cell wall biogenesis; peptidoglycan biosynthesis. In terms of biological role, cell wall formation. Catalyzes the addition of glutamate to the nucleotide precursor UDP-N-acetylmuramoyl-L-alanine (UMA). This is UDP-N-acetylmuramoylalanine--D-glutamate ligase from Mycolicibacterium paratuberculosis (strain ATCC BAA-968 / K-10) (Mycobacterium paratuberculosis).